The following is a 640-amino-acid chain: Protein ALTERED PHOSPHATE STARVATION RESPONSE 1 (640 aa).

The interval 60–175 (TPLHLHHNPP…ATPQASSVVS (116 aa)) is disordered. The span at 68–87 (PPSPSPPPPPPPRPPPPPLS) shows a compositional bias: pro residues. Over residues 88 to 103 (PGSETTTWTTTTTSSV) the composition is skewed to low complexity. The segment covering 104 to 118 (LPPPPPPPPPPPPPS) has biased composition (pro residues). The span at 144-173 (TTATRTATGTGSDAAVTTAPTTATPQASSV) shows a compositional bias: low complexity. A coiled-coil region spans residues 336 to 371 (KTEKAKKDVEKLESQLSVSSQAIQSASNEIIKLRET).

As to expression, expressed in the root tip of primary and lateral roots, specifically in the meristematic region, including the quiescent center and lateral root cap cells.

It is found in the nucleus. Functionally, required for the coordination of cell differentiation and cell elongation in the root tip. Required for the coordination of cell processes necessary for correct root growth in response to phosphate starvation, through the modulation of the auxin transporter protein PIN7. The protein is Protein ALTERED PHOSPHATE STARVATION RESPONSE 1 of Arabidopsis thaliana (Mouse-ear cress).